The following is a 242-amino-acid chain: Uridylate kinase (242 aa).

11 to 14 (KLSG) serves as a coordination point for ATP. The tract at residues 19 to 24 (GEKGVG) is involved in allosteric activation by GTP. Position 53 (Gly-53) interacts with UMP. 2 residues coordinate ATP: Gly-54 and Arg-58. Residues Asp-73 and 134 to 141 (IGSPYFST) each bind UMP. The ATP site is built by Asn-162, Tyr-168, and Asp-171.

Belongs to the UMP kinase family. As to quaternary structure, homohexamer.

Its subcellular location is the cytoplasm. The enzyme catalyses UMP + ATP = UDP + ADP. Its pathway is pyrimidine metabolism; CTP biosynthesis via de novo pathway; UDP from UMP (UMPK route): step 1/1. With respect to regulation, allosterically activated by GTP. Inhibited by UTP. Functionally, catalyzes the reversible phosphorylation of UMP to UDP. The polypeptide is Uridylate kinase (Streptococcus pyogenes serotype M1).